The following is a 270-amino-acid chain: Karrikin insensitive 2 receptor CA (270 aa).

The active-site Nucleophile is serine 95. Active-site residues include aspartate 217 and histidine 246.

Belongs to the AB hydrolase superfamily. Expressed in stigma.

It is found in the nucleus. The protein localises to the cytoplasm. Functionally, hydrolase which may be involved in plant olfaction during volatile communication. This chain is Karrikin insensitive 2 receptor CA, found in Petunia hybrida (Petunia).